Here is a 432-residue protein sequence, read N- to C-terminus: Glutamate-1-semialdehyde 2,1-aminomutase (432 aa).

Lysine 270 is subject to N6-(pyridoxal phosphate)lysine.

Belongs to the class-III pyridoxal-phosphate-dependent aminotransferase family. HemL subfamily. In terms of assembly, homodimer. Requires pyridoxal 5'-phosphate as cofactor.

Its subcellular location is the cytoplasm. It catalyses the reaction (S)-4-amino-5-oxopentanoate = 5-aminolevulinate. The protein operates within porphyrin-containing compound metabolism; protoporphyrin-IX biosynthesis; 5-aminolevulinate from L-glutamyl-tRNA(Glu): step 2/2. The protein is Glutamate-1-semialdehyde 2,1-aminomutase of Acinetobacter baumannii (strain ATCC 17978 / DSM 105126 / CIP 53.77 / LMG 1025 / NCDC KC755 / 5377).